A 192-amino-acid chain; its full sequence is Transcriptional activator GvpE (192 aa).

Lysine 140–arginine 145 provides a ligand contact to DNA. The leucine-zipper stretch occupies residues glutamate 150–tyrosine 181.

Interacts with GvpD, also with c-GvpD from H.salinarum.

The protein localises to the cytoplasm. With respect to regulation, the amount of protein that accumulates is controlled by GvpD; GvpD causes a reduction in the amount of GvpE, preventing accumulation of excessive amounts of gas vesicles. Its function is as follows. Plays a regulatory role in gas vesicle synthesis, activates transcription of the gvpA operon, and probably of the gvpD operon. Gas vesicles are hollow, gas filled proteinaceous nanostructures found in some microorganisms. They allow positioning of halobacteria at the optimal depth for growth in the poorly aerated, shallow brine pools of their habitat. Functionally, expression of a 9.5 kb mc-vac DNA fragment containing 2 divergently transcribed regions (gvpD-gvpE-gvpF-gvpG-gvpH-gvpI-gvpJ-gvpK-gvpL-gvpM and gvpA-gvpC-gvpN-gvpO) allows H.volcanii to produce gas vesicles. The polypeptide is Transcriptional activator GvpE (Haloferax mediterranei (strain ATCC 33500 / DSM 1411 / JCM 8866 / NBRC 14739 / NCIMB 2177 / R-4) (Halobacterium mediterranei)).